Here is a 946-residue protein sequence, read N- to C-terminus: 4-alpha-glucanotransferase DPE2 (946 aa).

CBM20 domains are found at residues 7–115 (KKSL…DWWQ) and 150–264 (SLEP…PWRG). The disordered stretch occupies residues 919 to 946 (SGRSFPGKVDGAEESGEKLAKVQLNGKP).

The protein belongs to the disproportionating enzyme family.

The protein resides in the cytoplasm. The protein localises to the cytosol. The enzyme catalyses Transfers a segment of a (1-&gt;4)-alpha-D-glucan to a new position in an acceptor, which may be glucose or a (1-&gt;4)-alpha-D-glucan.. Its function is as follows. Cytosolic alpha-glucanotransferase essential for the cytosolic metabolism of maltose, an intermediate on the pathway by which starch is converted to sucrose in leaves at night. The sequence is that of 4-alpha-glucanotransferase DPE2 (DPE2) from Oryza sativa subsp. japonica (Rice).